We begin with the raw amino-acid sequence, 506 residues long: Glycerol kinase (506 aa).

Thr-12 contacts ADP. Thr-12, Thr-13, and Ser-14 together coordinate ATP. A sn-glycerol 3-phosphate-binding site is contributed by Thr-12. ADP is bound at residue Arg-16. 4 residues coordinate sn-glycerol 3-phosphate: Arg-82, Glu-83, Tyr-134, and Asp-246. Positions 82, 83, 134, 246, and 247 each coordinate glycerol. Residues Thr-268 and Gly-312 each contribute to the ADP site. Residues Thr-268, Gly-312, Gln-316, and Gly-413 each coordinate ATP. ADP is bound by residues Gly-413 and Asn-417.

Belongs to the FGGY kinase family.

The catalysed reaction is glycerol + ATP = sn-glycerol 3-phosphate + ADP + H(+). The protein operates within polyol metabolism; glycerol degradation via glycerol kinase pathway; sn-glycerol 3-phosphate from glycerol: step 1/1. With respect to regulation, inhibited by fructose 1,6-bisphosphate (FBP). In terms of biological role, key enzyme in the regulation of glycerol uptake and metabolism. Catalyzes the phosphorylation of glycerol to yield sn-glycerol 3-phosphate. In Leifsonia xyli subsp. xyli (strain CTCB07), this protein is Glycerol kinase.